The chain runs to 344 residues: Isopentenyl-diphosphate delta-isomerase (344 aa).

A substrate-binding site is contributed by 9 to 10 (RK). FMN is bound by residues 65–67 (AMT), Ser95, and Asn124. Substrate is bound at residue Gln154. Mg(2+) is bound at residue Glu155. FMN is bound by residues Lys185, Thr215, 259 to 261 (GVR), and 280 to 281 (SG).

The protein belongs to the IPP isomerase type 2 family. In terms of assembly, homooctamer. Dimer of tetramers. Requires FMN as cofactor. NADPH is required as a cofactor. It depends on Mg(2+) as a cofactor.

It localises to the cytoplasm. The catalysed reaction is isopentenyl diphosphate = dimethylallyl diphosphate. In terms of biological role, involved in the biosynthesis of isoprenoids. Catalyzes the 1,3-allylic rearrangement of the homoallylic substrate isopentenyl (IPP) to its allylic isomer, dimethylallyl diphosphate (DMAPP). In Lacticaseibacillus casei (strain BL23) (Lactobacillus casei), this protein is Isopentenyl-diphosphate delta-isomerase.